The following is a 23-amino-acid chain: Acetylcholine receptor subunit gamma (23 aa).

It belongs to the ligand-gated ion channel (TC 1.A.9) family. Acetylcholine receptor (TC 1.A.9.1) subfamily. Gamma/CHRNG sub-subfamily. Pentamer of two alpha chains, and one each of the beta, delta, and gamma chains.

The protein resides in the postsynaptic cell membrane. It localises to the cell membrane. The enzyme catalyses K(+)(in) = K(+)(out). It catalyses the reaction Na(+)(in) = Na(+)(out). Functionally, after binding acetylcholine, the AChR responds by an extensive change in conformation that affects all subunits and leads to opening of an ion-conducting channel across the plasma membrane. The chain is Acetylcholine receptor subunit gamma (chrng) from Electrophorus electricus (Electric eel).